The following is a 573-amino-acid chain: Phosphoenolpyruvate-protein phosphotransferase (573 aa).

His-190 serves as the catalytic Tele-phosphohistidine intermediate. Phosphoenolpyruvate contacts are provided by Arg-297 and Arg-332. Residues Glu-431 and Asp-455 each contribute to the Mg(2+) site. Residues 454-455 and Arg-465 contribute to the phosphoenolpyruvate site; that span reads ND. Catalysis depends on Cys-502, which acts as the Proton donor.

Belongs to the PEP-utilizing enzyme family. Homodimer. Requires Mg(2+) as cofactor.

The protein resides in the cytoplasm. It catalyses the reaction L-histidyl-[protein] + phosphoenolpyruvate = N(pros)-phospho-L-histidyl-[protein] + pyruvate. Its activity is regulated as follows. Irreversibly inhibited the sulfhydryl reagent N-ethylmaleimide (NEM). General (non sugar-specific) component of the phosphoenolpyruvate-dependent sugar phosphotransferase system (sugar PTS). This major carbohydrate active-transport system catalyzes the phosphorylation of incoming sugar substrates concomitantly with their translocation across the cell membrane. Enzyme I transfers the phosphoryl group from phosphoenolpyruvate (PEP) to the phosphoryl carrier protein (HPr). The protein is Phosphoenolpyruvate-protein phosphotransferase (ptsI) of Mycoplasma capricolum subsp. capricolum (strain California kid / ATCC 27343 / NCTC 10154).